Here is a 463-residue protein sequence, read N- to C-terminus: DNA-binding protein K10 (463 aa).

Residues 1–13 (MVSKNQFYQNWTM) are compositionally biased toward polar residues. Residues 1-304 (MVSKNQFYQN…RNGPGPGPMM (304 aa)) are disordered. Residues 14-50 (QSQQQHPHQMQQQFQQQQQPNLQHRNNQSNNNNCNNN) show a composition bias toward low complexity. A compositionally biased stretch (polar residues) spans 85–94 (QMMFSSSQMP). 7 tandem repeats follow at residues 87–94 (MFSSSQMP), 95–102 (SDPLYIDF), 103–110 (SSPPPGFK), 111–118 (HNQVGSPK), 119–126 (KKSMKGIK), 127–134 (QQQHPSPN), and 135–142 (QQQPPSPN). The segment at 87-142 (MFSSSQMPSDPLYIDFSSPPPGFKHNQVGSPKKKSMKGIKQQQHPSPNQQQPPSPN) is 7 X approximate tandem repeats. Positions 142–193 (NQQQHPSPNQQQHPSPNQQQHPNSNQQQHLSPNQQQGKMNNQNNNHMNQSQQ) are enriched in low complexity. Residues 194 to 214 (PFNNQMNGSDWQRHPGNNPNQ) show a composition bias toward polar residues. Composition is skewed to pro residues over residues 225-270 (GPPP…PPVP) and 282-291 (GGPPPPPPPL). A DNA-binding region (H-T-H motif) is located at residues 397–416 (DELFAQYKGQRDKFVSLYEA). The disordered stretch occupies residues 426–463 (AATVKAKDAKSDKDKNAISSQSAAPKAGSAKDATIPNP). Over residues 430–441 (KAKDAKSDKDKN) the composition is skewed to basic and acidic residues.

In terms of assembly, interacts (via N-terminus) with sqd; the interaction is direct and may be involved in localization of sqd to the oocyte during oogenesis.

The protein resides in the nucleus. Functionally, may be involved in localization of sqd to the oocyte during oogenesis. The polypeptide is DNA-binding protein K10 (fs(1)K10) (Drosophila melanogaster (Fruit fly)).